Consider the following 339-residue polypeptide: Heat-inducible transcription repressor HrcA (339 aa).

This sequence belongs to the HrcA family.

Functionally, negative regulator of class I heat shock genes (grpE-dnaK-dnaJ and groELS operons). Prevents heat-shock induction of these operons. This Paraburkholderia xenovorans (strain LB400) protein is Heat-inducible transcription repressor HrcA.